The sequence spans 366 residues: Pectinesterase A (366 aa).

The first 24 residues, 1–24 (MLKTISGTLALSLIIAASVHQAQA), serve as a signal peptide directing secretion. Substrate is bound by residues Thr-109 and Gln-153. Asp-178 functions as the Proton donor in the catalytic mechanism. Cys-192 and Cys-212 are oxidised to a cystine. Catalysis depends on Asp-199, which acts as the Nucleophile. Residues Arg-219, Asn-226, Tyr-230, Arg-267, Trp-269, and Thr-272 each contribute to the substrate site.

This sequence belongs to the pectinesterase family. Monomer.

The protein localises to the secreted. The catalysed reaction is [(1-&gt;4)-alpha-D-galacturonosyl methyl ester](n) + n H2O = [(1-&gt;4)-alpha-D-galacturonosyl](n) + n methanol + n H(+). The protein operates within glycan metabolism; pectin degradation; 2-dehydro-3-deoxy-D-gluconate from pectin: step 1/5. In terms of biological role, involved in maceration and soft-rotting of plant tissue. The polypeptide is Pectinesterase A (pemA) (Dickeya chrysanthemi (Pectobacterium chrysanthemi)).